The sequence spans 84 residues: Chymotrypsin inhibitor Ani s 6 (84 aa).

A signal peptide spans 1-22 (MFQSTFFLVLMVCVATARFANK). 5 cysteine pairs are disulfide-bonded: Cys25–Cys58, Cys34–Cys54, Cys38–Cys50, Cys42–Cys79, and Cys60–Cys73. The TIL domain occupies 25–79 (CPPNEEYNECGNPCQEKCDNGEPVICTYQCEHRCFCKQGYVRLTEDGECVPEEFC).

The protein belongs to the serine protease inhibitor-like (TIL domain-containing) family.

It localises to the secreted. In terms of biological role, inhibits alpha-chymotrypsin, but not trypsin. The polypeptide is Chymotrypsin inhibitor Ani s 6 (Anisakis simplex (Herring worm)).